A 171-amino-acid polypeptide reads, in one-letter code: 3-hydroxydecanoyl-[acyl-carrier-protein] dehydratase (171 aa).

His-70 is an active-site residue.

The protein belongs to the thioester dehydratase family. FabA subfamily. Homodimer.

The protein resides in the cytoplasm. It catalyses the reaction a (3R)-hydroxyacyl-[ACP] = a (2E)-enoyl-[ACP] + H2O. The enzyme catalyses (3R)-hydroxydecanoyl-[ACP] = (2E)-decenoyl-[ACP] + H2O. It carries out the reaction (2E)-decenoyl-[ACP] = (3Z)-decenoyl-[ACP]. The protein operates within lipid metabolism; fatty acid biosynthesis. In terms of biological role, necessary for the introduction of cis unsaturation into fatty acids. Catalyzes the dehydration of (3R)-3-hydroxydecanoyl-ACP to E-(2)-decenoyl-ACP and then its isomerization to Z-(3)-decenoyl-ACP. Can catalyze the dehydratase reaction for beta-hydroxyacyl-ACPs with saturated chain lengths up to 16:0, being most active on intermediate chain length. This chain is 3-hydroxydecanoyl-[acyl-carrier-protein] dehydratase, found in Shewanella frigidimarina (strain NCIMB 400).